We begin with the raw amino-acid sequence, 223 residues long: Small ribosomal subunit protein uS3 (223 aa).

In terms of domain architecture, KH type-2 spans 39–117 (IREHLRKKPS…RPELNAKLVA (79 aa)).

This sequence belongs to the universal ribosomal protein uS3 family. Part of the 30S ribosomal subunit. Forms a tight complex with proteins S10 and S14.

Binds the lower part of the 30S subunit head. Binds mRNA in the 70S ribosome, positioning it for translation. The protein is Small ribosomal subunit protein uS3 of Chlamydia felis (strain Fe/C-56) (Chlamydophila felis).